The primary structure comprises 231 residues: 5'-methylthioadenosine/S-adenosylhomocysteine nucleosidase (231 aa).

Glutamate 12 (proton acceptor) is an active-site residue. Substrate contacts are provided by residues glycine 78, methionine 153, and methionine 174–glutamate 175. The active-site Proton donor is the aspartate 198.

Belongs to the PNP/UDP phosphorylase family. MtnN subfamily.

The enzyme catalyses S-adenosyl-L-homocysteine + H2O = S-(5-deoxy-D-ribos-5-yl)-L-homocysteine + adenine. It catalyses the reaction S-methyl-5'-thioadenosine + H2O = 5-(methylsulfanyl)-D-ribose + adenine. The catalysed reaction is 5'-deoxyadenosine + H2O = 5-deoxy-D-ribose + adenine. Its pathway is amino-acid biosynthesis; L-methionine biosynthesis via salvage pathway; S-methyl-5-thio-alpha-D-ribose 1-phosphate from S-methyl-5'-thioadenosine (hydrolase route): step 1/2. Catalyzes the irreversible cleavage of the glycosidic bond in both 5'-methylthioadenosine (MTA) and S-adenosylhomocysteine (SAH/AdoHcy) to adenine and the corresponding thioribose, 5'-methylthioribose and S-ribosylhomocysteine, respectively. Also cleaves 5'-deoxyadenosine, a toxic by-product of radical S-adenosylmethionine (SAM) enzymes, into 5-deoxyribose and adenine. In Psychromonas ingrahamii (strain DSM 17664 / CCUG 51855 / 37), this protein is 5'-methylthioadenosine/S-adenosylhomocysteine nucleosidase.